A 394-amino-acid chain; its full sequence is NAD(P)H-quinone oxidoreductase subunit H (394 aa).

Belongs to the complex I 49 kDa subunit family. In terms of assembly, NDH-1 can be composed of about 15 different subunits; different subcomplexes with different compositions have been identified which probably have different functions.

It localises to the cellular thylakoid membrane. It catalyses the reaction a plastoquinone + NADH + (n+1) H(+)(in) = a plastoquinol + NAD(+) + n H(+)(out). It carries out the reaction a plastoquinone + NADPH + (n+1) H(+)(in) = a plastoquinol + NADP(+) + n H(+)(out). In terms of biological role, NDH-1 shuttles electrons from an unknown electron donor, via FMN and iron-sulfur (Fe-S) centers, to quinones in the respiratory and/or the photosynthetic chain. The immediate electron acceptor for the enzyme in this species is believed to be plastoquinone. Couples the redox reaction to proton translocation, and thus conserves the redox energy in a proton gradient. Cyanobacterial NDH-1 also plays a role in inorganic carbon-concentration. This is NAD(P)H-quinone oxidoreductase subunit H from Synechococcus sp. (strain JA-3-3Ab) (Cyanobacteria bacterium Yellowstone A-Prime).